Reading from the N-terminus, the 89-residue chain is Small ribosomal subunit protein uS15 (89 aa).

This sequence belongs to the universal ribosomal protein uS15 family. As to quaternary structure, part of the 30S ribosomal subunit. Forms a bridge to the 50S subunit in the 70S ribosome, contacting the 23S rRNA.

In terms of biological role, one of the primary rRNA binding proteins, it binds directly to 16S rRNA where it helps nucleate assembly of the platform of the 30S subunit by binding and bridging several RNA helices of the 16S rRNA. Functionally, forms an intersubunit bridge (bridge B4) with the 23S rRNA of the 50S subunit in the ribosome. This Anaeromyxobacter dehalogenans (strain 2CP-1 / ATCC BAA-258) protein is Small ribosomal subunit protein uS15.